The primary structure comprises 651 residues: Probable replication restart protein PriA (651 aa).

8 residues coordinate Zn(2+): C371, C374, C380, C383, C399, C402, C411, and C414.

It belongs to the helicase family. PriA subfamily. As to quaternary structure, component of the replication restart primosome. Zn(2+) serves as cofactor.

Initiates the restart of stalled replication forks, which reloads the replicative helicase on sites other than the origin of replication. Recognizes and binds to abandoned replication forks and remodels them to uncover a helicase loading site. Promotes assembly of the primosome at these replication forks. The polypeptide is Probable replication restart protein PriA (Mycobacterium leprae (strain TN)).